The following is a 119-amino-acid chain: Dihydroneopterin aldolase (119 aa).

Residues Glu21, Tyr53, and 72 to 73 each bind substrate; that span reads IE. Residue Lys99 is the Proton donor/acceptor of the active site.

Belongs to the DHNA family.

The catalysed reaction is 7,8-dihydroneopterin = 6-hydroxymethyl-7,8-dihydropterin + glycolaldehyde. Its pathway is cofactor biosynthesis; tetrahydrofolate biosynthesis; 2-amino-4-hydroxy-6-hydroxymethyl-7,8-dihydropteridine diphosphate from 7,8-dihydroneopterin triphosphate: step 3/4. Functionally, catalyzes the conversion of 7,8-dihydroneopterin to 6-hydroxymethyl-7,8-dihydropterin. This chain is Dihydroneopterin aldolase (folB), found in Streptococcus pyogenes serotype M1.